A 107-amino-acid chain; its full sequence is MAIKKIKKDDTVIVITGRDKGRQGKVLKVLPNSRLLVEGINLVKKHVKPNPNKNEQGGILERELSIHVSNVAIYNPAAKKADRVGIKTLEDGSKVRIFKSNGEVIDV.

The protein belongs to the universal ribosomal protein uL24 family. Part of the 50S ribosomal subunit.

One of two assembly initiator proteins, it binds directly to the 5'-end of the 23S rRNA, where it nucleates assembly of the 50S subunit. In terms of biological role, one of the proteins that surrounds the polypeptide exit tunnel on the outside of the subunit. This chain is Large ribosomal subunit protein uL24, found in Coxiella burnetii (strain Dugway 5J108-111).